Here is a 364-residue protein sequence, read N- to C-terminus: D-alanine--D-alanine ligase (364 aa).

The region spanning 146-352 (KLCAMNAGIA…FAELVEKLLL (207 aa)) is the ATP-grasp domain. An ATP-binding site is contributed by 179–234 (TKRFDWPLFVKPASLGSSVGISKVRNAEELAAALENACGLDSKALVEAAISGREIE). Mg(2+) contacts are provided by D305, E319, and N321.

It belongs to the D-alanine--D-alanine ligase family. Mg(2+) serves as cofactor. Requires Mn(2+) as cofactor.

Its subcellular location is the cytoplasm. The catalysed reaction is 2 D-alanine + ATP = D-alanyl-D-alanine + ADP + phosphate + H(+). The protein operates within cell wall biogenesis; peptidoglycan biosynthesis. Functionally, cell wall formation. The polypeptide is D-alanine--D-alanine ligase (Chlorobaculum tepidum (strain ATCC 49652 / DSM 12025 / NBRC 103806 / TLS) (Chlorobium tepidum)).